We begin with the raw amino-acid sequence, 262 residues long: MSKHIPRKRFGQNFLQDASVIAGIVHAVNPQPDDIVIEIGPGLGAITKPLLARLKHLHVVEIDRDIIERLKAEHPADKLTIHAGDALAFDFASVSEAPLKIVGNLPYNISTPLLFHLASYGNRVTDMHFMLQKEVIERMVAEPSTADYGRLTVMLQYRFYMENILFVPPEAFWPPPKVDSAVVRMIPAPGRCGTARDEALLEKLVSQAFAQRRKTLRNNLKGLADAADLEALGIDPGLRPENLPVEDFVRLANHLHDKGARG.

S-adenosyl-L-methionine is bound by residues Asn13, Leu15, Gly40, Glu61, Asp85, and Asn104.

It belongs to the class I-like SAM-binding methyltransferase superfamily. rRNA adenine N(6)-methyltransferase family. RsmA subfamily.

Its subcellular location is the cytoplasm. It carries out the reaction adenosine(1518)/adenosine(1519) in 16S rRNA + 4 S-adenosyl-L-methionine = N(6)-dimethyladenosine(1518)/N(6)-dimethyladenosine(1519) in 16S rRNA + 4 S-adenosyl-L-homocysteine + 4 H(+). Functionally, specifically dimethylates two adjacent adenosines (A1518 and A1519) in the loop of a conserved hairpin near the 3'-end of 16S rRNA in the 30S particle. May play a critical role in biogenesis of 30S subunits. This is Ribosomal RNA small subunit methyltransferase A from Chromobacterium violaceum (strain ATCC 12472 / DSM 30191 / JCM 1249 / CCUG 213 / NBRC 12614 / NCIMB 9131 / NCTC 9757 / MK).